The sequence spans 715 residues: Discoidin, CUB and LCCL domain-containing protein 1 (715 aa).

An N-terminal signal peptide occupies residues 1-34 (MVPGARGGGALARAAGRGLLALLLAVSAPLRLQA). Topologically, residues 35-459 (EELGDGCGHL…TSTGINITTV (425 aa)) are extracellular. 2 cysteine pairs are disulfide-bonded: Cys-41–Cys-68 and Cys-94–Cys-112. Residues 41-150 (CGHLVTYQDS…RGFLLTYASS (110 aa)) form the CUB domain. Asn-64 is a glycosylation site (N-linked (GlcNAc...) asparagine). An N-linked (GlcNAc...) asparagine glycan is attached at Asn-124. The region spanning 152-248 (HPDLITCLER…RDGSLSDKRF (97 aa)) is the LCCL domain. Intrachain disulfides connect Cys-158-Cys-174 and Cys-178-Cys-200. The F5/8 type C domain occupies 248-412 (FLFTSNGCSR…IALKVELIGC (165 aa)). Asn-277 is a glycosylation site (N-linked (GlcNAc...) asparagine). A disordered region spans residues 278-312 (ESGDQVHWSPGQARLQDQGPSWASGDSSNNHKPRE). Over residues 295–307 (QGPSWASGDSSNN) the composition is skewed to polar residues. Asn-351, Asn-418, and Asn-455 each carry an N-linked (GlcNAc...) asparagine glycan. Residues 460-480 (AIPLVLLVVLVFAGMGIFAAF) form a helical membrane-spanning segment. The Cytoplasmic portion of the chain corresponds to 481–715 (RKKKKKGSPY…LNQTAMTALL (235 aa)). Position 513 is a phosphoserine (Ser-513). Thr-614 is modified (phosphothreonine). Positions 619 to 702 (SGYRVPGPQP…SDSYSAPRDC (84 aa)) are disordered.

The protein localises to the membrane. This Homo sapiens (Human) protein is Discoidin, CUB and LCCL domain-containing protein 1 (DCBLD1).